Consider the following 1955-residue polypeptide: Callose synthase 3 (1955 aa).

At Met1 to Arg488 the chain is on the cytoplasmic side. Residues Met489–Gln509 traverse the membrane as a helical segment. At Pro510–Lys521 the chain is on the extracellular side. Residues Val522–Ile542 traverse the membrane as a helical segment. At Leu543 to Arg558 the chain is on the cytoplasmic side. A helical membrane pass occupies residues Tyr559–Tyr579. Residues Ser580–Leu604 lie on the Extracellular side of the membrane. A helical membrane pass occupies residues Phe605–Phe625. The Cytoplasmic portion of the chain corresponds to Pro626–Ser660. The chain crosses the membrane as a helical span at residues Ala661 to Phe681. Over Ser682–Asn717 the chain is Extracellular. Residues Ile718–Ile738 form a helical membrane-spanning segment. The Cytoplasmic portion of the chain corresponds to Trp739 to Tyr1517. A helical membrane pass occupies residues Phe1518–Leu1538. Residues Tyr1539–Gln1566 lie on the Extracellular side of the membrane. Residues Ile1567–Met1587 form a helical membrane-spanning segment. Topologically, residues Glu1588–Thr1597 are cytoplasmic. Residues Ala1598–Leu1618 traverse the membrane as a helical segment. Residues Gly1619–His1661 lie on the Extracellular side of the membrane. Residues Phe1662 to Tyr1682 traverse the membrane as a helical segment. At Arg1683–Tyr1688 the chain is on the cytoplasmic side. A helical membrane pass occupies residues Leu1689–Phe1709. Residues Asn1710–Arg1761 lie on the Extracellular side of the membrane. Residues Gly1762–Tyr1782 traverse the membrane as a helical segment. Residues His1783–Asn1792 lie on the Cytoplasmic side of the membrane. The helical transmembrane segment at Phe1793–Val1813 threads the bilayer. Residues Ser1814 to Gly1833 lie on the Extracellular side of the membrane. Residues Leu1834 to Ile1854 form a helical membrane-spanning segment. Over Gln1855 to Asp1856 the chain is Cytoplasmic. A helical transmembrane segment spans residues Ile1857 to Ala1877. Topologically, residues Cys1878–Glu1899 are extracellular. Residues Ile1900–Ser1920 traverse the membrane as a helical segment. Residues Glu1921–Glu1955 are Cytoplasmic-facing.

This sequence belongs to the glycosyltransferase 48 family.

It is found in the cell membrane. It carries out the reaction [(1-&gt;3)-beta-D-glucosyl](n) + UDP-alpha-D-glucose = [(1-&gt;3)-beta-D-glucosyl](n+1) + UDP + H(+). In terms of biological role, involved in callose synthesis at the forming cell plate during cytokinesis. During plant growth and development, callose is found as a transitory component of the cell plate in dividing cells, is a major component of pollen mother cell walls and pollen tubes, and is found as a structural component of plasmodesmatal canals. In Arabidopsis thaliana (Mouse-ear cress), this protein is Callose synthase 3 (CALS3).